A 1026-amino-acid chain; its full sequence is Multidrug resistance protein MdtC (1026 aa).

11 consecutive transmembrane segments (helical) span residues 16-36, 333-353, 360-380, 387-407, 435-455, 459-479, 528-548, 853-873, 897-917, 953-973, and 984-1004; these read LLAL…PVAP, EVEQ…FLFL, LIPA…IYLC, LSLM…IVVL, VFSI…MGGI, LFHE…LIAL, WVLL…ISIP, LLLI…LYES, LFNA…IGLV, PILM…FSYG, and ITIV…TPVV.

This sequence belongs to the resistance-nodulation-cell division (RND) (TC 2.A.6) family. MdtC subfamily. Part of a tripartite efflux system composed of MdtA, MdtB and MdtC. MdtC forms a heteromultimer with MdtB.

The protein localises to the cell inner membrane. This Edwardsiella ictaluri (strain 93-146) protein is Multidrug resistance protein MdtC.